A 447-amino-acid chain; its full sequence is Hemogen (447 aa).

A disordered region spans residues 1–91 (MDLGKDQSLS…EMKVELPSQL (91 aa)). Positions 7–86 (QSLSKLHQTP…RQQNTEMKVE (80 aa)) are necessary for nuclear localization. Composition is skewed to basic and acidic residues over residues 14–25 (QTPDHHQEESHV) and 35–49 (RNRE…EAQE). Positions 59-78 (EKKHKRQRTGKRSERGRKRQ) are enriched in basic residues. Serine 89 and serine 122 each carry phosphoserine. The tract at residues 137 to 156 (QESVTLQENSSEYQATAVQN) is disordered. Residue serine 200 is modified to Phosphoserine. Disordered regions lie at residues 210–280 (AKVL…MAVP) and 306–337 (AMSK…PGSE). Residue threonine 217 is modified to Phosphothreonine. Residues 306 to 316 (AMSKDPSHKTT) are compositionally biased toward basic and acidic residues.

Its subcellular location is the nucleus. Functionally, regulates the proliferation and differentiation of hematopoietic cells. Overexpression block the TPA-induced megakaryocytic differentiation in the K562 cell model. May also prevent cell apoptosis through the activation of the nuclear factor-kappa B (NF-kB). This Bos taurus (Bovine) protein is Hemogen (HEMGN).